The following is a 186-amino-acid chain: ADP compounds hydrolase NudE (186 aa).

Position 40 (glutamate 40) interacts with substrate. One can recognise a Nudix hydrolase domain in the interval 45–172 (TNREAVMIVP…DFNEARNVSA (128 aa)). The short motif at 80 to 101 (GLIDPGESVYEAANRELKEEVG) is the Nudix box element. Glutamate 95 and glutamate 99 together coordinate a divalent metal cation. Serine 118 contacts substrate.

The protein belongs to the Nudix hydrolase family. In terms of assembly, homodimer. Mg(2+) is required as a cofactor.

It catalyses the reaction ADP-D-ribose + H2O = D-ribose 5-phosphate + AMP + 2 H(+). Functionally, active on adenosine(5')triphospho(5')adenosine (Ap3A), ADP-ribose, NADH, adenosine(5')diphospho(5')adenosine (Ap2A). The polypeptide is ADP compounds hydrolase NudE (nudE) (Escherichia coli (strain K12)).